We begin with the raw amino-acid sequence, 459 residues long: Argininosuccinate lyase (459 aa).

This sequence belongs to the lyase 1 family. Argininosuccinate lyase subfamily.

It is found in the cytoplasm. It catalyses the reaction 2-(N(omega)-L-arginino)succinate = fumarate + L-arginine. It participates in amino-acid biosynthesis; L-arginine biosynthesis; L-arginine from L-ornithine and carbamoyl phosphate: step 3/3. In Prochlorococcus marinus (strain MIT 9215), this protein is Argininosuccinate lyase.